A 135-amino-acid chain; its full sequence is ATP synthase epsilon chain (135 aa).

Belongs to the ATPase epsilon chain family. As to quaternary structure, F-type ATPases have 2 components, CF(1) - the catalytic core - and CF(0) - the membrane proton channel. CF(1) has five subunits: alpha(3), beta(3), gamma(1), delta(1), epsilon(1). CF(0) has three main subunits: a, b and c.

It is found in the cell inner membrane. Its function is as follows. Produces ATP from ADP in the presence of a proton gradient across the membrane. In Allorhizobium ampelinum (strain ATCC BAA-846 / DSM 112012 / S4) (Agrobacterium vitis (strain S4)), this protein is ATP synthase epsilon chain.